Consider the following 249-residue polypeptide: Expansin-A19 (249 aa).

Positions 1–21 are cleaved as a signal peptide; it reads MGNIFLQLLAVVALCIAPARS. Positions 41 to 154 constitute an Expansin-like EG45 domain; that stretch reads GGACGYGNLY…QQVKCWRYGG (114 aa). 2 N-linked (GlcNAc...) asparagine glycosylation sites follow: Asn116 and Asn216. The Expansin-like CBD domain maps to 164 to 243; sequence YFELVLVTNM…GWSFGQTFST (80 aa).

The protein belongs to the expansin family. Expansin A subfamily.

It localises to the secreted. Its subcellular location is the cell wall. The protein localises to the membrane. Its function is as follows. May cause loosening and extension of plant cell walls by disrupting non-covalent bonding between cellulose microfibrils and matrix glucans. No enzymatic activity has been found. May be required for rapid internodal elongation in deepwater rice during submergence. This Oryza sativa subsp. japonica (Rice) protein is Expansin-A19 (EXPA19).